Here is a 126-residue protein sequence, read N- to C-terminus: MSDPRYQIDVSVVTRYLKDQSDPESDRFAFAYTITVQNNGSIKAKLMSRHWLITNGDGEVEEVRGAGVIGQQPTIEPGQSHTYSSGAVISTRVGTMQGSYQMFAEDGKRFEADIAPFRLAVPGALH.

Positions 2-126 constitute an ApaG domain; it reads SDPRYQIDVS…FRLAVPGALH (125 aa).

The protein is Protein ApaG of Pseudomonas putida (strain W619).